Reading from the N-terminus, the 795-residue chain is MARPRLLVVSMSLPVTAKRTGEESWSFTMSPGGLVSALLGLKEFETKWIGWPGVDVHDAIGKKTLSITLAEKGCIPVFLEEVCDQYYNGYCNNILWPIFHYLGTPPEYRNDATITYQSQYEAYKKANQIFFDVVKEHYEEGDVVWCHDYHVMLLPQYLKEYNSKMKVGWFLHTPFPSSEMYKTLPSRSDLLRSVLTADLVGFHTYDFARHFLNACMCILGVEATSEGIVDQGKVTRVAVFPIGIEPERFINTSELSEVVQYMKKFKNDFGGRKLILGVDRLDTIKGIPQKYQAFEKFLEENAEWRGKVMLLQIAVPTRNGIGEYQKIKDQCHYHVGRINGRFGSISSVPIIHLDCSIDFNQLCALYAITDVLLVTSLRDGMNLVSSEFIACQKAEKGVLILSEFAGAGQSLGAGAILVNPWNIKEVSSAIGEALNMSHEEKERKHKINFQYVKTHSTQQWADDFMKLTLTNILCSKLIEITTSAELGAGLAATLELPEHDVIQQYSKSNNRLLILGFYGTLTQPMKNQERRGDGMNLELHPQLKERLKELCSDPKTTVVVLSRSEKCILDKNFGEYNMWLAAENGMFLRHTSGEWVTRIPEHMNLEWIDGVKHVFKYFTERTPGSYLETSEASLVWNYENADAEFGRAQARDMLQHLWAGPISNASVDVVRGGQSVEVHAVGVTKGSAMERILGEIVHNKSMATPIDYVLCIGCFLGKDEDVYTFFEPELTKKAKSLSSSGSDSPKKVSSTIVDLKGENYFSVAIGQTHTKARYFLDSSDDVVKLIGKLCTHNNA.

Positions 4-469 (PRLLVVSMSL…WADDFMKLTL (466 aa)) are glycosyltransferase.

The protein in the N-terminal section; belongs to the glycosyltransferase 20 family. In the C-terminal section; belongs to the trehalose phosphatase family.

The catalysed reaction is D-glucose 6-phosphate + UDP-alpha-D-glucose = alpha,alpha-trehalose 6-phosphate + UDP + H(+). The polypeptide is Probable alpha,alpha-trehalose-phosphate synthase [UDP-forming] 4 (TPS4) (Arabidopsis thaliana (Mouse-ear cress)).